Reading from the N-terminus, the 545-residue chain is Acetyltransferase BOT5 (545 aa).

Residues 1-19 (MATIPLFFSLILFLRLYHA) form the signal peptide. Residues Asn-70 and Asn-198 are each glycosylated (N-linked (GlcNAc...) asparagine). The active-site Proton acceptor is His-208. Residues Asn-346 and Asn-445 are each glycosylated (N-linked (GlcNAc...) asparagine). The segment at 466–493 (GAGNQKSSSTRKAARHTEPTQAQTQPGR) is disordered.

It belongs to the plant acyltransferase family.

It functions in the pathway secondary metabolite biosynthesis. Acetyltransferase; part of the gene cluster that mediates the biosynthesis of botrydial. Botrydial is necessary for colonization of plant tissue by the T4 strain. It is a strain-dependent virulence factor since highly aggressive strains like SAS56 or B05 still retain substantial virulence when botrydial synthesis is impaired, since they produce also botcinic acid. The first step of botrydial biosynthesis is performed by the sesquiterpene synthase BOT2 which catalyzes the cyclization of farnesyl diphosphate (FPP) to presilphiperfolan-8-beta-ol (PSP). The cytochrome P450 monooxygenase BOT4 then catalyzes the hydroxylation at C-4 to give a probotryane intermediate. Acetylation of the hydroxyl at C-4 is carried out by the acetyltransferase BOT5, followed by the combined action of the P450 monooxygenases BOT3 and BOT1, to yield finally the glycol, via the regio- and stereospecific hydroxylations at C-10 and C-15 of the probotryane intermediates, respectively. The cleavage of the C10-C15 bond of probotryane skeleton is an intriguing and chemically important reaction, which could be mediated by some of the monooxygenases or by a combination of them. It is possible that either BOT3 or BOT1 would oxidize either the 10- or the 15-hydroxy group to the hydroperoxide derivative, which would then undergo heterolytic fragmentation to give the dialdehyde botrydial. Finally, the dehydrogenase BOT7 might be involved in the conversion of botrydial to dihydrobotrydial. The chain is Acetyltransferase BOT5 from Botryotinia fuckeliana (Noble rot fungus).